The primary structure comprises 272 residues: Acetylglutamate kinase (272 aa).

Substrate contacts are provided by residues 41–42 (GG), arginine 63, and asparagine 166.

This sequence belongs to the acetylglutamate kinase family. ArgB subfamily.

It is found in the cytoplasm. It catalyses the reaction N-acetyl-L-glutamate + ATP = N-acetyl-L-glutamyl 5-phosphate + ADP. The protein operates within amino-acid biosynthesis; L-arginine biosynthesis; N(2)-acetyl-L-ornithine from L-glutamate: step 2/4. Catalyzes the ATP-dependent phosphorylation of N-acetyl-L-glutamate. This chain is Acetylglutamate kinase, found in Anaeromyxobacter sp. (strain K).